The following is a 490-amino-acid chain: MAKVRTRFAPSPTGRMHVGNLRTALYEYLIAKHEGGDFILRIEDTDQERLVEGATEIIYRTIAKTGLIHDEGPDKDKGFGPYVQSERQATGIYLKYAKELVENGEAYYCFCTKERLETLKSAVGEEDGESKEITKYDKHCLHLSKEEVEANLAAGMPYVIRQNMPTEGTTSFTDAIYGTITVENSELDDMILIKSDGFPTYNFANVIDDHFMEITHVVRGNEYLSSTPKYTRLYKAFGWEEPVYIHCPLITNEEHQKLSKRSGHSSFEDLIEQGFVTEAIVNFIALLGWSSTTNEEIFSLEELVREFDYTHINKSPSVFDMNKLRWMNGEYIKRMDSEKYYEYALPQIKKVVTKDYDLKFIADLVKTRIETFLDIAEMIDFFDELPEYDIAMYTHKKMKTDSENSLKVLQDVLPRFEELTCYSVSSIESVLMGYIAENGIKNGQGLWPVRTAVSGKQSTPGGAYEIMSILGKEESLRRIRIAIDKLSSSL.

A 'HIGH' region motif is present at residues 10 to 20 (PSPTGRMHVGN). Zn(2+) contacts are provided by Cys109, Cys111, Cys140, and His142. The short motif at 257–261 (KLSKR) is the 'KMSKS' region element. Lys260 serves as a coordination point for ATP.

It belongs to the class-I aminoacyl-tRNA synthetase family. Glutamate--tRNA ligase type 1 subfamily. Monomer. Zn(2+) is required as a cofactor.

It localises to the cytoplasm. The catalysed reaction is tRNA(Glu) + L-glutamate + ATP = L-glutamyl-tRNA(Glu) + AMP + diphosphate. Functionally, catalyzes the attachment of glutamate to tRNA(Glu) in a two-step reaction: glutamate is first activated by ATP to form Glu-AMP and then transferred to the acceptor end of tRNA(Glu). In Lachnoclostridium phytofermentans (strain ATCC 700394 / DSM 18823 / ISDg) (Clostridium phytofermentans), this protein is Glutamate--tRNA ligase.